The primary structure comprises 156 residues: RNA pyrophosphohydrolase (156 aa).

Residues 6-148 (NYRPNVAAIV…KKNIYVKVIK (143 aa)) enclose the Nudix hydrolase domain. The Nudix box motif lies at 43-64 (GGIDKGESVKNALFRELKEEIG).

It belongs to the Nudix hydrolase family. RppH subfamily. The cofactor is a divalent metal cation.

In terms of biological role, accelerates the degradation of transcripts by removing pyrophosphate from the 5'-end of triphosphorylated RNA, leading to a more labile monophosphorylated state that can stimulate subsequent ribonuclease cleavage. This chain is RNA pyrophosphohydrolase, found in Campylobacter jejuni subsp. jejuni serotype O:6 (strain 81116 / NCTC 11828).